Here is a 284-residue protein sequence, read N- to C-terminus: Mevalonate kinase (284 aa).

Pro86 to Ala96 contacts ATP. The active-site Proton acceptor is Asp137.

It belongs to the GHMP kinase family. Mevalonate kinase subfamily. In terms of assembly, homodimer. Mg(2+) is required as a cofactor.

The protein resides in the cytoplasm. It catalyses the reaction (R)-mevalonate + ATP = (R)-5-phosphomevalonate + ADP + H(+). Its pathway is isoprenoid biosynthesis; isopentenyl diphosphate biosynthesis via mevalonate pathway; isopentenyl diphosphate from (R)-mevalonate: step 1/3. Catalyzes the phosphorylation of (R)-mevalonate (MVA) to (R)-mevalonate 5-phosphate (MVAP). Functions in the mevalonate (MVA) pathway leading to isopentenyl diphosphate (IPP), a key precursor for the biosynthesis of isoprenoid compounds such as archaeal membrane lipids. The chain is Mevalonate kinase from Archaeoglobus fulgidus (strain ATCC 49558 / DSM 4304 / JCM 9628 / NBRC 100126 / VC-16).